Reading from the N-terminus, the 91-residue chain is Small ribosomal subunit protein uS19 (91 aa).

Belongs to the universal ribosomal protein uS19 family.

Functionally, protein S19 forms a complex with S13 that binds strongly to the 16S ribosomal RNA. The polypeptide is Small ribosomal subunit protein uS19 (Prochlorococcus marinus (strain NATL1A)).